We begin with the raw amino-acid sequence, 122 residues long: Large ribosomal subunit protein uL14c (122 aa).

The protein belongs to the universal ribosomal protein uL14 family. In terms of assembly, part of the 50S ribosomal subunit.

Its subcellular location is the plastid. The protein localises to the chloroplast. Binds to 23S rRNA. This chain is Large ribosomal subunit protein uL14c, found in Dioscorea elephantipes (Elephant's foot yam).